We begin with the raw amino-acid sequence, 117 residues long: Large ribosomal subunit protein uL18 (117 aa).

The protein belongs to the universal ribosomal protein uL18 family. Part of the 50S ribosomal subunit; part of the 5S rRNA/L5/L18/L25 subcomplex. Contacts the 5S and 23S rRNAs.

This is one of the proteins that bind and probably mediate the attachment of the 5S RNA into the large ribosomal subunit, where it forms part of the central protuberance. The chain is Large ribosomal subunit protein uL18 from Nitrosococcus oceani (strain ATCC 19707 / BCRC 17464 / JCM 30415 / NCIMB 11848 / C-107).